The primary structure comprises 552 residues: uncharacterized protein (552 aa).

A run of 4 helical transmembrane segments spans residues 127–147 (AIML…ISLL), 160–180 (LIIV…YINI), 393–413 (LTKQ…LSAV), and 517–537 (VIDS…FICI).

It localises to the membrane. This is an uncharacterized protein from Saccharomyces cerevisiae (strain ATCC 204508 / S288c) (Baker's yeast).